The primary structure comprises 294 residues: Glycine--tRNA ligase alpha subunit (294 aa).

Belongs to the class-II aminoacyl-tRNA synthetase family. Tetramer of two alpha and two beta subunits.

It is found in the cytoplasm. It carries out the reaction tRNA(Gly) + glycine + ATP = glycyl-tRNA(Gly) + AMP + diphosphate. This is Glycine--tRNA ligase alpha subunit from Nostoc sp. (strain PCC 7120 / SAG 25.82 / UTEX 2576).